The chain runs to 248 residues: Ribosomal RNA small subunit methyltransferase J (248 aa).

Residues 98-99 (RD), 114-115 (ER), 150-151 (SS), and Asp168 contribute to the S-adenosyl-L-methionine site.

This sequence belongs to the methyltransferase superfamily. RsmJ family.

It localises to the cytoplasm. The catalysed reaction is guanosine(1516) in 16S rRNA + S-adenosyl-L-methionine = N(2)-methylguanosine(1516) in 16S rRNA + S-adenosyl-L-homocysteine + H(+). Its function is as follows. Specifically methylates the guanosine in position 1516 of 16S rRNA. This Shewanella denitrificans (strain OS217 / ATCC BAA-1090 / DSM 15013) protein is Ribosomal RNA small subunit methyltransferase J.